The sequence spans 395 residues: uncharacterized protein (395 aa).

Disordered regions lie at residues 185–282 (RREV…SSTA) and 316–372 (GSST…TCSS). A compositionally biased stretch (basic residues) spans 248–257 (LHLRTRHPHR). Residues 342-360 (ARASTHSRSSPSASANSRY) are compositionally biased toward low complexity.

This is an uncharacterized protein from Streptomyces fradiae (Streptomyces roseoflavus).